The sequence spans 201 residues: L(+)-tartrate dehydratase subunit beta (201 aa).

The active site involves histidine 37.

This sequence belongs to the class-I fumarase family. In terms of assembly, heterotetramer of two alpha and two beta subunits.

The catalysed reaction is (2R,3R)-tartrate = oxaloacetate + H2O. The polypeptide is L(+)-tartrate dehydratase subunit beta (ttdB) (Escherichia coli O6:K15:H31 (strain 536 / UPEC)).